The following is a 109-amino-acid chain: Aquaporin-2 (109 aa).

Residues 1 to 6 (SIAFSR) are Cytoplasmic-facing. Residues 7–27 (AVFAEFLATLIFVFFGLGSAL) form a helical membrane-spanning segment. At 28 to 35 (NWQQSLPS) the chain is on the extracellular side. Residues 36–54 (VLQIAMAFGLAIGTLVQAL) traverse the membrane as a helical segment. The Cytoplasmic segment spans residues 55 to 59 (GHISG). Residues 60-69 (AHINPAVTVA) constitute an intramembrane region (discontinuously helical). Residues 63–65 (NPA) carry the NPA 1 motif. Topologically, residues 70–80 (CLVGCHVSFLR) are cytoplasmic. Residues 81–102 (AAFYVAAQLLGAVAGAALLHEV) form a helical membrane-spanning segment. Residues 103-109 (TPSDVRG) lie on the Extracellular side of the membrane.

The protein belongs to the MIP/aquaporin (TC 1.A.8) family. Homotetramer. In terms of processing, serine phosphorylation is necessary and sufficient for expression at the apical membrane. Endocytosis is not phosphorylation-dependent. Post-translationally, N-glycosylated.

The protein resides in the apical cell membrane. The protein localises to the basolateral cell membrane. It is found in the cell membrane. It localises to the cytoplasmic vesicle membrane. Its subcellular location is the golgi apparatus. The protein resides in the trans-Golgi network membrane. The enzyme catalyses H2O(in) = H2O(out). The catalysed reaction is glycerol(in) = glycerol(out). Functionally, forms a water-specific channel that provides the plasma membranes of renal collecting duct with high permeability to water, thereby permitting water to move in the direction of an osmotic gradient. Plays an essential role in renal water homeostasis. Could also be permeable to glycerol. In Talpa europaea (European mole), this protein is Aquaporin-2.